A 155-amino-acid chain; its full sequence is UPF0461 protein C5orf24 homolog (155 aa).

Polar residues predominate over residues 60–69 (NETHLQTSTS). The interval 60–155 (NETHLQTSTS…QQALMCSSDA (96 aa)) is disordered. A compositionally biased stretch (basic residues) spans 78-92 (LKKKKNVGRSGKRGR). Polar residues predominate over residues 94–107 (SGTTKSAGYRTSTG).

Belongs to the UPF0461 family.

This Xenopus laevis (African clawed frog) protein is UPF0461 protein C5orf24 homolog.